Consider the following 34-residue polypeptide: Crassicorin-II (34 aa).

An intrachain disulfide couples cysteine 6 to cysteine 30.

As to expression, highly expressed by the mesenteries. Moderately expressed by the pharynx. Weakly expressed by the gonad and pedal disk. No expression in tentacle.

It localises to the secreted. Its subcellular location is the nematocyst. Its function is as follows. Peptide with both antimicrobial and neurotoxin activities. Cationic AMP with antimicrobial activity against both Gram-positive bacteria (B.subtilis) and Gram-negative bacteria (E.coli and S.enterica). Shows no significant antimicrobial activity against bacteria S.aureus and P.aeruginosa, as well as the fungus C.albicans. In vivo, induces reversible paralytic activity towards the shrimp P.paucidens. May act by impairing sodium or potassium channels in the prey. The sequence is that of Crassicorin-II from Urticina crassicornis (Mottled anemone).